Reading from the N-terminus, the 583-residue chain is Tetratricopeptide repeat protein 39C (583 aa).

The interval 1 to 22 (MAGSEQQRPRRRDDGDSDAAAA) is disordered. TPR repeat units lie at residues 315-348 (SLFM…AVDQ), 353-386 (HVCL…SRWS), and 485-518 (GLKY…ELCR).

Belongs to the TTC39 family.

The protein is Tetratricopeptide repeat protein 39C (TTC39C) of Homo sapiens (Human).